Consider the following 492-residue polypeptide: Pentatricopeptide repeat-containing protein At4g21705, mitochondrial (492 aa).

The N-terminal 17 residues, 1–17 (MNILRRIPANLIASRYY), are a transit peptide targeting the mitochondrion. PPR repeat units follow at residues 125 to 159 (NDKT…GFVT), 160 to 194 (SSLT…NVAP), 195 to 225 (DNYS…MERR), 231 to 261 (DWNT…SENR), 266 to 296 (DGEG…EKDV), 301 to 335 (INQD…GNCY), 336 to 370 (DFRV…GKAT), and 371 to 405 (TPES…EVGS).

Belongs to the PPR family. P subfamily.

Its subcellular location is the mitochondrion. The chain is Pentatricopeptide repeat-containing protein At4g21705, mitochondrial from Arabidopsis thaliana (Mouse-ear cress).